The chain runs to 292 residues: Shikimate dehydrogenase (NADP(+)) (292 aa).

Shikimate-binding positions include 25-27 (SKS) and threonine 72. Catalysis depends on lysine 76, which acts as the Proton acceptor. Asparagine 97 and aspartate 113 together coordinate shikimate. NADP(+) is bound by residues 137–141 (GAGGA), 161–166 (NRTQSK), and methionine 230. Tyrosine 232 lines the shikimate pocket. Position 254 (glycine 254) interacts with NADP(+).

This sequence belongs to the shikimate dehydrogenase family. As to quaternary structure, homodimer.

It carries out the reaction shikimate + NADP(+) = 3-dehydroshikimate + NADPH + H(+). Its pathway is metabolic intermediate biosynthesis; chorismate biosynthesis; chorismate from D-erythrose 4-phosphate and phosphoenolpyruvate: step 4/7. Its function is as follows. Involved in the biosynthesis of the chorismate, which leads to the biosynthesis of aromatic amino acids. Catalyzes the reversible NADPH linked reduction of 3-dehydroshikimate (DHSA) to yield shikimate (SA). The protein is Shikimate dehydrogenase (NADP(+)) of Shewanella sp. (strain MR-7).